A 228-amino-acid polypeptide reads, in one-letter code: MASSSLLLASVVVAAMVSAVSCGPPKVPPGPNITASYGDKWLEARATWYGAAKGAGRKDNSGACGYKDVDKAPFLGMNSCGNDPIFKDGKGCGSCFEIKCSKPKACSDKPVLIHVTDMNDEPIAAYHFDLFGLAFGAMAKDGKDEELLKYVAGDGDVVEVEIKEKGSEEWKALKESWGAIWRIDTPKPLKGPFSVRVTTEGGEKIIAEDAIPDGWKADSVYKSNVQAK.

An N-terminal signal peptide occupies residues M1 to C22. N32 carries an N-linked (GlcNAc...) asparagine glycan. The 112-residue stretch at S61–A172 folds into the Expansin-like EG45 domain. 2 disulfides stabilise this stretch: C64-C92 and C100-C106. Positions G142–S223 constitute an Expansin-like CBD domain.

It belongs to the expansin family. Expansin B subfamily.

It is found in the secreted. The protein resides in the cell wall. The protein localises to the membrane. Its function is as follows. May cause loosening and extension of plant cell walls by disrupting non-covalent bonding between cellulose microfibrils and matrix glucans. No enzymatic activity has been found. May be required for rapid internodal elongation in deepwater rice during submergence. The protein is Expansin-B13 (EXPB13) of Oryza sativa subsp. japonica (Rice).